The following is a 380-amino-acid chain: GATOR1 complex protein NPRL2 (380 aa).

The tract at residues 1–133 is interaction with PDPK1; sequence MGSSCRIECI…SKQKLVPIMT (133 aa). Arginine 78 lines the GDP pocket. Arginine 78 is modified (asymmetric dimethylarginine). Residues lysine 158 and lysine 357 each participate in a glycyl lysine isopeptide (Lys-Gly) (interchain with G-Cter in ubiquitin) cross-link.

Belongs to the NPR2 family. In terms of assembly, within the GATOR complex, component of the GATOR1 subcomplex, made of DEPDC5, NPRL2 and NPRL3. GATOR1 mediates the strong interaction of the GATOR complex with small GTPases Rag (RagA/RRAGA, RagB/RRAGB, RagC/RRAGC and/or RagD/RRAGD) heterodimers. GATOR1 interacts with GPR155/LYCHOS; interaction takes place in presence of cholesterol and prevents interaction between GATOR1 and KICSTOR. Interacts with PDPK1. In terms of processing, in the presence of abundant amino acids, ubiquitinated at Lys-158 and Lys-357 via 'Lys-6'-linked ubiquitination by the WDR24 component of the GATOR2 complex, thereby inhibiting the GATOR1 complex and promoting mTORC1 activation. Asymmetric dimethylation at Arg-78 by PRMT1 inhibits the GTPase activator activity of the GATOR1 complex and consequently inducing timely mTORC1 activation under methionine-sufficient conditions.

Its subcellular location is the lysosome membrane. Functionally, catalytic component of the GATOR1 complex, a multiprotein complex that functions as an inhibitor of the amino acid-sensing branch of the mTORC1 pathway. In response to amino acid depletion, the GATOR1 complex has GTPase activating protein (GAP) activity and strongly increases GTP hydrolysis by RagA/RRAGA (or RagB/RRAGB) within heterodimeric Rag complexes, thereby turning them into their inactive GDP-bound form, releasing mTORC1 from lysosomal surface and inhibiting mTORC1 signaling. In the presence of abundant amino acids, the GATOR1 complex is ubiquitinated and inhibited by GATOR2. Within the GATOR1 complex, NPRL2 constitutes the catalytic subunit that mediates the GTPase activator activity and under methionine-sufficient conditions, the GTPase activator activity is inhibited by PRMT1 through methylation and consequently inducing timely mTORC1 activation. Its function is as follows. Suppresses Src-dependent tyrosine phosphorylation and activation of PDPK1 and its downstream signaling. Down-regulates PDPK1 kinase activity by interfering with tyrosine phosphorylation at 'Tyr-9', 'Tyr-373' and 'Tyr-376' residues. May act as a tumor suppressor. Suppresses cell growth and enhances sensitivity to various anticancer drugs. This chain is GATOR1 complex protein NPRL2, found in Bos taurus (Bovine).